The following is a 307-amino-acid chain: Homoserine kinase (307 aa).

Position 86–96 (86–96 (PIARGLGSSAA)) interacts with ATP.

Belongs to the GHMP kinase family. Homoserine kinase subfamily.

The protein localises to the cytoplasm. It catalyses the reaction L-homoserine + ATP = O-phospho-L-homoserine + ADP + H(+). The protein operates within amino-acid biosynthesis; L-threonine biosynthesis; L-threonine from L-aspartate: step 4/5. In terms of biological role, catalyzes the ATP-dependent phosphorylation of L-homoserine to L-homoserine phosphate. In Petrotoga mobilis (strain DSM 10674 / SJ95), this protein is Homoserine kinase.